Here is a 292-residue protein sequence, read N- to C-terminus: Polyketide transferase af380 (292 aa).

Residues 46–267 (DVAVWFQQQG…FDLVAGRGHM (222 aa)) are abhydrolase domain.

It belongs to the polyketide transferase af380 family.

The catalysed reaction is fumagillol + dodecapentaneoyl-[polyketide synthase] = prefumagillin + holo-[polyketide synthase]. The protein operates within secondary metabolite biosynthesis; terpenoid biosynthesis. Its function is as follows. Polyketide transferase; part of the gene cluster that mediates the biosynthesis of fumagillin, a meroterpenoid that has numerous biological activities including irreversible inhibition of human type 2 methionine aminopeptidase (METAP2). Within the pathway, the polyketide transferase af380 catalyzes the transfer of a dodecapentaenoyl group synthesized by the polyketide synthase af370 onto 5R-hydroxy-seco-sesquiterpene to produce prefumagillin. The pathway begins with the conversion of farnesyl pyrophosphate (FPP) to beta-trans-bergamotene by the membrane-bound beta-trans-bergamotene synthase af520. The multifunctional cytochrome P450 monooxygenase af510 then converts beta-trans-bergamotene into 5-keto-demethoxyfumagillol via several oxydation steps. 5-keto-demethoxyfumagillol is then subjected to successive C-6 hydroxylation and O-methylation by the dioxygenase af480 and O-methyltransferase af390-400, respectively, to yield 5-keto-fumagillol, which is then stereoselectively reduced by the keto-reductase af490 to 5R-hydroxy-seco-sesquiterpene. The next step is the polyketide transferase af380-catalyzed transfer of a dodecapentaenoyl group synthesized by the polyketide synthase af370 onto 5R-hydroxy-seco-sesquiterpene which leads to the production of prefumagillin. Finally, oxidative cleavage by the monooxygenase af470 converts prefumagillin to fumagillin. This Aspergillus fumigatus (strain ATCC MYA-4609 / CBS 101355 / FGSC A1100 / Af293) (Neosartorya fumigata) protein is Polyketide transferase af380.